A 113-amino-acid polypeptide reads, in one-letter code: Large ribosomal subunit protein uL24 (113 aa).

This sequence belongs to the universal ribosomal protein uL24 family. In terms of assembly, part of the 50S ribosomal subunit.

Functionally, one of two assembly initiator proteins, it binds directly to the 5'-end of the 23S rRNA, where it nucleates assembly of the 50S subunit. In terms of biological role, one of the proteins that surrounds the polypeptide exit tunnel on the outside of the subunit. The protein is Large ribosomal subunit protein uL24 of Synechococcus elongatus (strain ATCC 33912 / PCC 7942 / FACHB-805) (Anacystis nidulans R2).